A 400-amino-acid polypeptide reads, in one-letter code: Acetylornithine aminotransferase (400 aa).

Residues Gly-106–Ala-107 and Phe-132 each bind pyridoxal 5'-phosphate. Arg-135 serves as a coordination point for N(2)-acetyl-L-ornithine. Residue Asp-217 to Gln-220 coordinates pyridoxal 5'-phosphate. Lys-246 carries the N6-(pyridoxal phosphate)lysine modification. A N(2)-acetyl-L-ornithine-binding site is contributed by Ser-274. Thr-275 is a pyridoxal 5'-phosphate binding site.

The protein belongs to the class-III pyridoxal-phosphate-dependent aminotransferase family. ArgD subfamily. As to quaternary structure, homodimer. Requires pyridoxal 5'-phosphate as cofactor.

The protein resides in the cytoplasm. The enzyme catalyses N(2)-acetyl-L-ornithine + 2-oxoglutarate = N-acetyl-L-glutamate 5-semialdehyde + L-glutamate. The protein operates within amino-acid biosynthesis; L-arginine biosynthesis; N(2)-acetyl-L-ornithine from L-glutamate: step 4/4. In Streptomyces clavuligerus, this protein is Acetylornithine aminotransferase.